The chain runs to 289 residues: uncharacterized protein (289 aa).

An HTH tetR-type domain is found at 2–62; that stretch reads NEKKERIIKT…SACEYYIGMS (61 aa). Residues 25–44 constitute a DNA-binding region (H-T-H motif); the sequence is TIQEIASECGISKGAFYLHF.

This is an uncharacterized protein from Bacillus subtilis (strain 168).